The primary structure comprises 221 residues: DNA replication complex GINS protein SLD5 (221 aa).

The protein belongs to the GINS4/SLD5 family. As to quaternary structure, component of the GINS complex which is a heterotetramer of gins1/psf1, gins2/psf2, gins3/psf3 and gins4/sld5. Component of the CMG helicase complex, composed of the mcm2-7 complex, the GINS complex and cdc45.

It is found in the nucleus. The protein resides in the chromosome. It localises to the cytoplasm. In terms of biological role, required for initiation of chromosomal DNA replication. Core component of CDC45-MCM-GINS (CMG) helicase, the molecular machine that unwinds template DNA during replication, and around which the replisome is built. This chain is DNA replication complex GINS protein SLD5, found in Xenopus laevis (African clawed frog).